A 367-amino-acid chain; its full sequence is Heme A synthase (367 aa).

The next 5 helical transmembrane spans lie at 25–45 (ALRFWLGFVLLALFCLVLVGG), 111–131 (LIARGIGVIFALPLLYFWLTG), 139–159 (WPLVGILALGGLQGFIGWWMV), 174–194 (LATHLVMACLIFAGCMWIMRG), and 210–230 (GFAATIAIFALFQIYLGALVA). Histidine 274 lines the heme pocket. 3 helical membrane passes run 276-296 (IGAYTLFALTLINMVIALRAA), 305-325 (AVVLFSLVTLQAAIGIATLLM), and 327-347 (VPLHWGLLHQAGALVVFGFAI). Histidine 335 lines the heme pocket.

Belongs to the COX15/CtaA family. Type 2 subfamily. Interacts with CtaB. Heme b serves as cofactor.

Its subcellular location is the cell membrane. The enzyme catalyses Fe(II)-heme o + 2 A + H2O = Fe(II)-heme a + 2 AH2. Its pathway is porphyrin-containing compound metabolism; heme A biosynthesis; heme A from heme O: step 1/1. In terms of biological role, catalyzes the conversion of heme O to heme A by two successive hydroxylations of the methyl group at C8. The first hydroxylation forms heme I, the second hydroxylation results in an unstable dihydroxymethyl group, which spontaneously dehydrates, resulting in the formyl group of heme A. In Rhizobium leguminosarum bv. trifolii (strain WSM2304), this protein is Heme A synthase.